Reading from the N-terminus, the 451-residue chain is G-protein coupled receptor 61 (451 aa).

Positions 1–14 (MESSPIPQSSGNSS) are enriched in low complexity. Residues 1 to 31 (MESSPIPQSSGNSSTLGRVPQTPGPSTASGV) are disordered. Residues 1 to 44 (MESSPIPQSSGNSSTLGRVPQTPGPSTASGVPEVGLRDVASESV) are Extracellular-facing. Asn-12 carries an N-linked (GlcNAc...) asparagine glycan. The helical transmembrane segment at 45-67 (ALFFMLLLDLTAVAGNAAVMAVI) threads the bilayer. Over 68–75 (AKTPALRK) the chain is Cytoplasmic. The helical transmembrane segment at 76 to 98 (FVFVFHLCLVDLLAALTLMPLAM) threads the bilayer. Residues 99–112 (LSSSALFDHALFGE) are Extracellular-facing. The helical transmembrane segment at 113 to 135 (VACRLYLFLSVCFVSLAILSVSA) threads the bilayer. Over 136 to 155 (INVERYYYVVHPMRYEVRMT) the chain is Cytoplasmic. The helical transmembrane segment at 156–178 (LGLVASVLVGVWVKALAMASVPV) threads the bilayer. Over 179 to 206 (LGRVSWEEGAPSVPPGCSLQWSHSAYCQ) the chain is Extracellular. A helical membrane pass occupies residues 207–229 (LFVVVFAVLYFLLPLLLILVVYC). Topologically, residues 230–287 (SMFRVARVAAMQHGPLPTWMETPRQRSESLSSRSTMVTSSGAPQTTPHRTFGGGKAAV) are cytoplasmic. The helical transmembrane segment at 288–310 (VLLAVGGQFLLCWLPYFSFHLYV) threads the bilayer. Over 311-324 (ALSAQPISTGQVES) the chain is Extracellular. The helical transmembrane segment at 325–344 (VVTWIGYFCFTSNPFFYGCL) threads the bilayer. Residues 345–451 (NRQIRGELSK…RPAASPRLES (107 aa)) are Cytoplasmic-facing.

It belongs to the G-protein coupled receptor 1 family. Forms heterodimer with MTNR1B. Interacts with ARRB1 and ARRB2 in a spontaneous and agonist-independent manner; leading to the internalization of GPR61 in the endosomal compartment. In terms of tissue distribution, expressed in brain; detected in frontal and temporal lobes, occipital pole, amygdala and hippocampus. Also expressed in testis and T cells, B cells, and monocyte. Low expression in many other tissues. Widely expressed in the hippocampus (at protein level).

The protein resides in the cell membrane. It localises to the endosome membrane. Functionally, orphan G-protein coupled receptor. Constitutively activates the G(s)-alpha/cAMP signaling pathway. Shows a reciprocal regulatory interaction with the melatonin receptor MTNR1B most likely through receptor heteromerization. May be involved in the regulation of food intake and body weight. This Homo sapiens (Human) protein is G-protein coupled receptor 61 (GPR61).